The chain runs to 1361 residues: Cell migration-inducing and hyaluronan-binding protein (1361 aa).

A signal peptide spans 1–30 (MGAAGRQDFLFKAMLTISWLTLTCFPGATS). One can recognise a G8 domain in the interval 44–166 (QPWNPGHDQD…KKLSWTFLNK (123 aa)). Residues Asn-119, Asn-165, Asn-312, Asn-370, and Asn-420 are each glycosylated (N-linked (GlcNAc...) asparagine). Positions 176 to 317 (GGYFFERSWG…GEYFNVSLSS (142 aa)) constitute a GG-type lectin 1 domain. The segment at 295 to 591 (AAARVFKLFQ…IHHTFSRCVT (297 aa)) is necessary for its endoplasmic reticulum (ER) retention and interaction with HSPA5. PbH1 repeat units lie at residues 572 to 594 (DPPTYIRDLSIHHTFSRCVTVHG), 595 to 617 (SNGLLIKDVVGYNSLGHCFFTED), 719 to 741 (IPLGKFYNNRAHSNYRAGMIIDN), and 798 to 819 (GGDVWLDSCRFADNGIGLTLAS). N-linked (GlcNAc...) asparagine glycans are attached at residues Asn-889 and Asn-921. The region spanning 1227-1361 (NDFAYIEVDG…PIPVVKKKKL (135 aa)) is the GG-type lectin 2 domain.

This sequence belongs to the CEMIP family. As to quaternary structure, interacts with EPHA2 and ITPR3. Interacts with HSPA5/BIP; the interaction induces calcium leakage from the endoplasmic reticulum and cell migration. Interacts with clathrin heavy chain/CLTC. In terms of processing, N-glycosylated; glycosylation is not necessary for HA-binding. As to expression, expressed in dermal and in synovial fibroblasts. Strongly expressed in gastric cancers compared with the paired normal tissues. Strongly expressed in both ductal carcinoma and invasive breast cancer cells compared with benign epithelial cells (at protein level). Strongly expressed in brain, placenta, prostate, breast, lung and testis. Expressed in fibroblasts, epithelial cells and cancer cells. In ear, it is specifically expressed in inner ear. Expressed in cochlea and vestibule tissues. Strongly expressed in gastric cancers compared with the paired normal tissues. Strongly expressed in colon adenocarcinomas compared with normal colonic mucosas. Strongly expressed in breast cancer as compared to normal breast tissue.

It localises to the nucleus. Its subcellular location is the cytoplasm. The protein localises to the endoplasmic reticulum. It is found in the cell membrane. The protein resides in the membrane. It localises to the clathrin-coated pit. Its subcellular location is the secreted. It catalyses the reaction Random hydrolysis of (1-&gt;4)-linkages between N-acetyl-beta-D-glucosamine and D-glucuronate residues in hyaluronate.. With respect to regulation, activity is up-regulated by histamine. In terms of biological role, mediates depolymerization of hyaluronic acid (HA) via the cell membrane-associated clathrin-coated pit endocytic pathway. Binds to hyaluronic acid. Hydrolyzes high molecular weight hyaluronic acid to produce an intermediate-sized product, a process that may occur through rapid vesicle endocytosis and recycling without intracytoplasmic accumulation or digestion in lysosomes. Involved in hyaluronan catabolism in the dermis of the skin and arthritic synovium. Positively regulates epithelial-mesenchymal transition (EMT), and hence tumor cell growth, invasion and cancer dissemination. In collaboration with HSPA5/BIP, promotes cancer cell migration in a calcium and PKC-dependent manner. May be involved in hearing. The chain is Cell migration-inducing and hyaluronan-binding protein from Homo sapiens (Human).